Reading from the N-terminus, the 160-residue chain is Eukaryotic translation initiation factor 5A-4 (160 aa).

Basic and acidic residues predominate over residues 1 to 12 (MSDEEHHFESKA). The segment at 1 to 21 (MSDEEHHFESKADAGASKTYP) is disordered. K52 is subject to Hypusine.

This sequence belongs to the eIF-5A family. In terms of processing, lys-52 undergoes hypusination, a unique post-translational modification that consists in the addition of a butylamino group from spermidine to lysine side chain, leading to the formation of the unusual amino acid hypusine. eIF-5As are the only known proteins to undergo this modification, which is essential for their function.

In terms of biological role, translation factor that promotes translation elongation and termination, particularly upon ribosome stalling at specific amino acid sequence contexts. Binds between the exit (E) and peptidyl (P) site of the ribosome and promotes rescue of stalled ribosome: specifically required for efficient translation of polyproline-containing peptides as well as other motifs that stall the ribosome. Acts as a ribosome quality control (RQC) cofactor by joining the RQC complex to facilitate peptidyl transfer during CAT tailing step. In Solanum lycopersicum (Tomato), this protein is Eukaryotic translation initiation factor 5A-4.